Consider the following 356-residue polypeptide: S-adenosylmethionine:tRNA ribosyltransferase-isomerase (356 aa).

The protein belongs to the QueA family. As to quaternary structure, monomer.

It localises to the cytoplasm. It catalyses the reaction 7-aminomethyl-7-carbaguanosine(34) in tRNA + S-adenosyl-L-methionine = epoxyqueuosine(34) in tRNA + adenine + L-methionine + 2 H(+). It functions in the pathway tRNA modification; tRNA-queuosine biosynthesis. Functionally, transfers and isomerizes the ribose moiety from AdoMet to the 7-aminomethyl group of 7-deazaguanine (preQ1-tRNA) to give epoxyqueuosine (oQ-tRNA). The sequence is that of S-adenosylmethionine:tRNA ribosyltransferase-isomerase from Serratia proteamaculans (strain 568).